The chain runs to 257 residues: MPADFTIVIPARYGSTRLPGKPLLELGGKPMIAHVCERALEAGAAEVVVATDDARIAEAVDGLPVTAMLTRTEHASGTERLAEVAERRAWSDDTLVVNLQGDEPFMDAALLRALAEALGRREDCRVATLAAPIHRPEEIFDPNVVKVVTDGENRALYFSRAAVPWDRESFAEGAGVPMPGMPYRRHIGVYAYTASYLRRYVDLEPSPLEHVERLEQLRILWHGDRILVVPVEGAPAPGVDTAADLERARRHLSGRTP.

Belongs to the KdsB family.

It localises to the cytoplasm. It catalyses the reaction 3-deoxy-alpha-D-manno-oct-2-ulosonate + CTP = CMP-3-deoxy-beta-D-manno-octulosonate + diphosphate. It functions in the pathway nucleotide-sugar biosynthesis; CMP-3-deoxy-D-manno-octulosonate biosynthesis; CMP-3-deoxy-D-manno-octulosonate from 3-deoxy-D-manno-octulosonate and CTP: step 1/1. Its pathway is bacterial outer membrane biogenesis; lipopolysaccharide biosynthesis. Its function is as follows. Activates KDO (a required 8-carbon sugar) for incorporation into bacterial lipopolysaccharide in Gram-negative bacteria. This chain is 3-deoxy-manno-octulosonate cytidylyltransferase, found in Methylococcus capsulatus (strain ATCC 33009 / NCIMB 11132 / Bath).